The sequence spans 90 residues: DNA-directed RNA polymerase subunit omega (90 aa).

Positions 69–90 (RQEQQEQEAAELAAVSSIAHNR) are disordered.

The protein belongs to the RNA polymerase subunit omega family. The RNAP catalytic core consists of 2 alpha, 1 beta, 1 beta' and 1 omega subunit. When a sigma factor is associated with the core the holoenzyme is formed, which can initiate transcription.

It carries out the reaction RNA(n) + a ribonucleoside 5'-triphosphate = RNA(n+1) + diphosphate. Functionally, promotes RNA polymerase assembly. Latches the N- and C-terminal regions of the beta' subunit thereby facilitating its interaction with the beta and alpha subunits. This chain is DNA-directed RNA polymerase subunit omega, found in Vibrio parahaemolyticus serotype O3:K6 (strain RIMD 2210633).